The chain runs to 448 residues: Maltoporin (448 aa).

An N-terminal signal peptide occupies residues 1 to 25 (MMITLRKLPLAVAVMAGIFAAQASA).

Belongs to the porin LamB (TC 1.B.3) family. Homotrimer formed of three 18-stranded antiparallel beta-barrels, containing three independent channels.

It localises to the cell outer membrane. It carries out the reaction beta-maltose(in) = beta-maltose(out). Its function is as follows. Involved in the transport of maltose and maltodextrins. The chain is Maltoporin from Cronobacter sakazakii (strain ATCC BAA-894) (Enterobacter sakazakii).